The primary structure comprises 318 residues: Trans-prenyltransferase (318 aa).

A helical transmembrane segment spans residues 1-21; the sequence is MLHLIYISIIVVLIIILISYT. Isopentenyl diphosphate contacts are provided by Lys85, Arg88, and His122. Mg(2+) is bound by residues Asp129 and Asp135. Arg140 lines the dimethylallyl diphosphate pocket. Arg141 is a binding site for isopentenyl diphosphate. Dimethylallyl diphosphate contacts are provided by Lys216, Thr217, and Gln254.

This sequence belongs to the FPP/GGPP synthase family. Asfivirus trans-prenyltransferase subfamily. Mg(2+) is required as a cofactor.

It is found in the host endoplasmic reticulum. The protein localises to the host membrane. The enzyme catalyses isopentenyl diphosphate + dimethylallyl diphosphate = (2E)-geranyl diphosphate + diphosphate. It catalyses the reaction isopentenyl diphosphate + (2E)-geranyl diphosphate = (2E,6E)-farnesyl diphosphate + diphosphate. The catalysed reaction is isopentenyl diphosphate + (2E,6E)-farnesyl diphosphate = (2E,6E,10E)-geranylgeranyl diphosphate + diphosphate. It carries out the reaction isopentenyl diphosphate + (2E,6E,10E)-geranylgeranyl diphosphate = (2E,6E,10E,14E)-geranylfarnesyl diphosphate + diphosphate. Its pathway is isoprenoid biosynthesis; farnesyl diphosphate biosynthesis; farnesyl diphosphate from geranyl diphosphate and isopentenyl diphosphate: step 1/1. It functions in the pathway isoprenoid biosynthesis; geranyl diphosphate biosynthesis; geranyl diphosphate from dimethylallyl diphosphate and isopentenyl diphosphate: step 1/1. The protein operates within isoprenoid biosynthesis; geranylgeranyl diphosphate biosynthesis; geranylgeranyl diphosphate from farnesyl diphosphate and isopentenyl diphosphate: step 1/1. Trans-prenyltransferase that catalyzes the sequential condensation of isopentenyl diphosphate (IPP) with different allylic diphosphates, such as dimethylallyl diphosphate (DMAPP), geranyl diphosphate (GPP), farnesyl diphosphate (FPP) and geranylgeranyl diphosphate (GGPP), farnesyl diphosphate being the best allylic substrate. The chain is Trans-prenyltransferase from African swine fever virus (isolate Warthog/Namibia/Wart80/1980) (ASFV).